A 920-amino-acid chain; its full sequence is Protein translocase subunit SecA 2 (920 aa).

ATP is bound by residues Q91, 109 to 113 (GEGKT), and D527. A compositionally biased stretch (basic and acidic residues) spans 859 to 870 (GEGSALDRRPTD). The segment at 859-920 (GEGSALDRRP…KSRNRRRRKR (62 aa)) is disordered. Residues 906-920 (PHRPGKSRNRRRRKR) show a composition bias toward basic residues.

This sequence belongs to the SecA family. In terms of assembly, monomer and homodimer. Part of the essential Sec protein translocation apparatus which comprises SecA, SecYEG and auxiliary proteins SecDF. Other proteins may also be involved.

The protein resides in the cell membrane. The protein localises to the cytoplasm. It carries out the reaction ATP + H2O + cellular proteinSide 1 = ADP + phosphate + cellular proteinSide 2.. Part of the Sec protein translocase complex. Interacts with the SecYEG preprotein conducting channel. Has a central role in coupling the hydrolysis of ATP to the transfer of proteins into and across the cell membrane, serving as an ATP-driven molecular motor driving the stepwise translocation of polypeptide chains across the membrane. The polypeptide is Protein translocase subunit SecA 2 (Streptomyces avermitilis (strain ATCC 31267 / DSM 46492 / JCM 5070 / NBRC 14893 / NCIMB 12804 / NRRL 8165 / MA-4680)).